The following is a 120-amino-acid chain: Large ribosomal subunit protein bL21 (120 aa).

Belongs to the bacterial ribosomal protein bL21 family. In terms of assembly, part of the 50S ribosomal subunit. Contacts protein L20.

Functionally, this protein binds to 23S rRNA in the presence of protein L20. In Rhizorhabdus wittichii (strain DSM 6014 / CCUG 31198 / JCM 15750 / NBRC 105917 / EY 4224 / RW1) (Sphingomonas wittichii), this protein is Large ribosomal subunit protein bL21.